Reading from the N-terminus, the 231-residue chain is Dephospho-CoA kinase (231 aa).

A DPCK domain is found at 29–231 (RVGLTGGIAS…IAGALRFDRR (203 aa)). Position 37–42 (37–42 (ASGKST)) interacts with ATP.

The protein belongs to the CoaE family.

It is found in the cytoplasm. It catalyses the reaction 3'-dephospho-CoA + ATP = ADP + CoA + H(+). The protein operates within cofactor biosynthesis; coenzyme A biosynthesis; CoA from (R)-pantothenate: step 5/5. In terms of biological role, catalyzes the phosphorylation of the 3'-hydroxyl group of dephosphocoenzyme A to form coenzyme A. This chain is Dephospho-CoA kinase, found in Cutibacterium acnes (strain DSM 16379 / KPA171202) (Propionibacterium acnes).